The chain runs to 523 residues: Amino acid transporter protein 6 (523 aa).

Residues M1–K19 lie on the Cytoplasmic side of the membrane. Residues M20 to I40 form a helical membrane-spanning segment. Residues T41–S51 are Extracellular-facing. A helical transmembrane segment spans residues V52–C72. Topologically, residues Y73–D86 are cytoplasmic. A helical membrane pass occupies residues F87–C107. Residues T108–L145 lie on the Extracellular side of the membrane. Residues L146–V166 traverse the membrane as a helical segment. The Cytoplasmic portion of the chain corresponds to Q167 to A173. A helical membrane pass occupies residues S174–F194. Over K195–P214 the chain is Extracellular. The chain crosses the membrane as a helical span at residues F215 to G235. Over A236–S249 the chain is Cytoplasmic. The helical transmembrane segment at I250–I270 threads the bilayer. Residues V271–K290 lie on the Extracellular side of the membrane. N289 carries an N-linked (GlcNAc...) asparagine glycan. Residues T291–L311 form a helical membrane-spanning segment. Topologically, residues N312–A348 are cytoplasmic. Residues L349–I369 form a helical membrane-spanning segment. The Extracellular segment spans residues N370 to L404. A helical transmembrane segment spans residues P405–I425. At D426–K429 the chain is on the cytoplasmic side. Residues S430 to W450 traverse the membrane as a helical segment. At D451–M523 the chain is on the extracellular side. N462 carries an N-linked (GlcNAc...) asparagine glycan. The PDZ-binding motif signature appears at T521–M523.

It belongs to the amino acid-polyamine-organocation (APC) superfamily. As to quaternary structure, interacts (via PDZ-binding motif) with nfrl-1 (via PDZ 2 domain); the interaction with nrfl-1 is required to sequester aat-6 to the apical cell membrane of intestinal cells. In terms of tissue distribution, expressed at the apical cell membrane of intestinal cells.

The protein localises to the apical cell membrane. Its function is as follows. Amino acid transporter that mediates the uptake of the L-enantiomers of various amino acids, including L-glutamate. May play a role in promoting fertility. In Caenorhabditis elegans, this protein is Amino acid transporter protein 6.